Here is a 277-residue protein sequence, read N- to C-terminus: Large ribosomal subunit protein uL2 (277 aa).

Residues 222–258 (GSVMNPCDHPHGGGEGRSPIGRPSPVTPWGKPALGYK) form a disordered region.

The protein belongs to the universal ribosomal protein uL2 family. In terms of assembly, part of the 50S ribosomal subunit. Forms a bridge to the 30S subunit in the 70S ribosome.

Functionally, one of the primary rRNA binding proteins. Required for association of the 30S and 50S subunits to form the 70S ribosome, for tRNA binding and peptide bond formation. It has been suggested to have peptidyltransferase activity; this is somewhat controversial. Makes several contacts with the 16S rRNA in the 70S ribosome. The sequence is that of Large ribosomal subunit protein uL2 from Clostridium perfringens (strain 13 / Type A).